Consider the following 223-residue polypeptide: Thiamine-phosphate synthase (223 aa).

4-amino-2-methyl-5-(diphosphooxymethyl)pyrimidine is bound by residues Q37–K41 and D72. Residues D73 and D92 each contribute to the Mg(2+) site. S110 lines the 4-amino-2-methyl-5-(diphosphooxymethyl)pyrimidine pocket. Residue T136 to S138 participates in 2-[(2R,5Z)-2-carboxy-4-methylthiazol-5(2H)-ylidene]ethyl phosphate binding. K139 is a binding site for 4-amino-2-methyl-5-(diphosphooxymethyl)pyrimidine. Residues G168 and I188–S189 each bind 2-[(2R,5Z)-2-carboxy-4-methylthiazol-5(2H)-ylidene]ethyl phosphate.

It belongs to the thiamine-phosphate synthase family. The cofactor is Mg(2+).

It carries out the reaction 2-[(2R,5Z)-2-carboxy-4-methylthiazol-5(2H)-ylidene]ethyl phosphate + 4-amino-2-methyl-5-(diphosphooxymethyl)pyrimidine + 2 H(+) = thiamine phosphate + CO2 + diphosphate. It catalyses the reaction 2-(2-carboxy-4-methylthiazol-5-yl)ethyl phosphate + 4-amino-2-methyl-5-(diphosphooxymethyl)pyrimidine + 2 H(+) = thiamine phosphate + CO2 + diphosphate. The enzyme catalyses 4-methyl-5-(2-phosphooxyethyl)-thiazole + 4-amino-2-methyl-5-(diphosphooxymethyl)pyrimidine + H(+) = thiamine phosphate + diphosphate. It functions in the pathway cofactor biosynthesis; thiamine diphosphate biosynthesis; thiamine phosphate from 4-amino-2-methyl-5-diphosphomethylpyrimidine and 4-methyl-5-(2-phosphoethyl)-thiazole: step 1/1. Functionally, condenses 4-methyl-5-(beta-hydroxyethyl)thiazole monophosphate (THZ-P) and 2-methyl-4-amino-5-hydroxymethyl pyrimidine pyrophosphate (HMP-PP) to form thiamine monophosphate (TMP). The sequence is that of Thiamine-phosphate synthase from Streptococcus agalactiae serotype Ia (strain ATCC 27591 / A909 / CDC SS700).